The following is a 309-amino-acid chain: Malate dehydrogenase (309 aa).

NAD(+) contacts are provided by residues 9–14 and aspartate 33; that span reads GAGFVG. Positions 82 and 88 each coordinate substrate. NAD(+)-binding positions include asparagine 95 and 118–120; that span reads VNN. Residues asparagine 120 and arginine 151 each contribute to the substrate site. Histidine 175 (proton acceptor) is an active-site residue.

This sequence belongs to the LDH/MDH superfamily. MDH type 3 family. As to quaternary structure, homotetramer (active enzyme); homodimer and homotrimer at temperatures lower than 55 degrees Celsius (inactive forms).

It carries out the reaction (S)-malate + NAD(+) = oxaloacetate + NADH + H(+). Catalyzes the reversible oxidation of malate to oxaloacetate. The sequence is that of Malate dehydrogenase from Chloroflexus aurantiacus (strain ATCC 29366 / DSM 635 / J-10-fl).